The following is a 204-amino-acid chain: Probable dTDP-4-oxo-2,6-dideoxy-D-glucose 3,5-epimerase (204 aa).

Residues arginine 21, glutamate 26, 45–47 (QAN), lysine 70, and histidine 117 each bind substrate. Tyrosine 130 acts as the Proton donor in catalysis. Glutamate 141 contributes to the substrate binding site. The tract at residues 164 to 204 (VGEGTPTHRPWRRPRRPGILPDYEGVPGALHRGGGRRGTGP) is disordered.

Belongs to the dTDP-4-dehydrorhamnose 3,5-epimerase family.

It functions in the pathway antibiotic biosynthesis. Involved in the biosynthesis of one of the two 2,6-deoxysugars, dTDP-L-oleandrose, attached to the macrolactone ring oleandolide to produce the aglycone antibiotic oleandomycin. Probably catalyzes the conversion of dTDP-4-keto-2,6-dideoxy-alpha-D-glucose to dTDP-4-keto-2,6-dideoxy-beta-L-galactose. This is Probable dTDP-4-oxo-2,6-dideoxy-D-glucose 3,5-epimerase from Streptomyces antibioticus.